Reading from the N-terminus, the 113-residue chain is Hydrogenase maturation factor HybF (113 aa).

Positions 2 and 3 each coordinate Ni(2+). Residues C73, C76, C89, and C92 each coordinate Zn(2+).

Belongs to the HypA/HybF family. HybF subfamily.

Functionally, involved in the maturation of [NiFe] hydrogenases. Required for nickel insertion into the metal center of the hydrogenase. The polypeptide is Hydrogenase maturation factor HybF (Salmonella typhi).